The chain runs to 414 residues: 11-beta-hydroxysteroid dehydrogenase type 2 (414 aa).

A run of 4 helical transmembrane segments spans residues 3-23 (DFAV…GGAV), 26-46 (FLAF…ATLL), 52-72 (ALCM…WLYF), and 341-361 (YYAG…PLSI). The tract at residues 382–414 (KQQGLSPNDNNNSIKENMNDSSSNNSNFTKCID) is disordered. A compositionally biased stretch (polar residues) spans 384-397 (QGLSPNDNNNSIKE).

Belongs to the short-chain dehydrogenases/reductases (SDR) family. In terms of tissue distribution, broadly expressed in peripheral (brain, gill, eye, heart, liver, head kidney, posterior kidney, and gut).

It localises to the membrane. It catalyses the reaction an 11beta-hydroxysteroid + NAD(+) = an 11-oxosteroid + NADH + H(+). The catalysed reaction is cortisol + NAD(+) = cortisone + NADH + H(+). It carries out the reaction corticosterone + NAD(+) = 11-dehydrocorticosterone + NADH + H(+). The enzyme catalyses 11beta,17beta-dihydroxyandrost-4-ene-3-one + NAD(+) = 17beta-hydroxyandrost-4-ene-3,11-dione + NADH + H(+). It catalyses the reaction 11beta-hydroxyandrost-4-ene-3,17-dione + NAD(+) = androst-4-ene-3,11,17-trione + NADH + H(+). It functions in the pathway steroid metabolism. In terms of biological role, catalyzes the conversion of biologically active 11beta-hydroxyglucocorticoids (11beta-hydroxysteroid) such as cortisol, to inactive 11-ketoglucocorticoids (11-oxosteroid) such as cortisone, in the presence of NAD(+). Cortisol is the primary glucocorticoid in teleosts and is released to increase glucose bioavailability in order to meet the increased energy demands in response to stress. Functions as a dehydrogenase (oxidase), thereby decreasing the concentration of active glucocorticoids, regulating the hypothalamus-pituitary-interrenal (HPI) axis function in adult fish. Decreasing the excess glucocorticoids may be of relevance to brain function and neural proliferation. Plays a key role by catalyzing the oxidation of 11beta-hydroxytestosterone (11beta,17beta-dihydroxyandrost-4-ene-3-one) to 11-ketotestosterone (17beta-hydroxyandrost-4-ene-3,11-dione), the major fish androgen, that activates androgen receptor transcriptional activity. Catalyzes the conversion of 11beta-hydroxyandrostenedione (11beta-hydroxyandrost-4-ene-3,17-dione) to 11-ketoandrostenedione (androst-4-ene-3,11,17-trione), which can be further metabolized to 11-ketotestosterone. Exerts a dual role in fish by inactivating glucocorticoids and activating androgens. This Danio rerio (Zebrafish) protein is 11-beta-hydroxysteroid dehydrogenase type 2 (hsd11b2).